We begin with the raw amino-acid sequence, 801 residues long: Phosphatidylinositol 4-kinase beta (801 aa).

Disordered regions lie at residues Met-1–Leu-29, Glu-101–Gln-121, and Arg-250–Pro-304. The residue at position 2 (Gly-2) is an N-acetylglycine. The segment at Gly-2–Val-68 is interaction with ACBD3. One can recognise a PIK helical domain in the interval Leu-29–Ser-242. The residue at position 258 (Ser-258) is a Phosphoserine. Positions Pro-259–Ser-268 are enriched in polar residues. Thr-263 is modified (phosphothreonine). Phosphoserine occurs at positions 266, 275, 277, 284, 294, and 413. Low complexity predominate over residues Asp-278–Ser-294. At Thr-423 the chain carries Phosphothreonine. Ser-496 carries the post-translational modification Phosphoserine. Phosphothreonine occurs at positions 502 and 504. A PI3K/PI4K catalytic domain is found at Glu-520–Thr-786. A G-loop region spans residues Val-526–Gly-532. The interval Gln-653–Asn-661 is catalytic loop. The segment at His-672–Thr-696 is activation loop.

It belongs to the PI3/PI4-kinase family. Type III PI4K subfamily. As to quaternary structure, interacts with ARF1 and ARF3 in the Golgi complex, but not with ARF4, ARF5 or ARF6. Interacts with NCS1/FREQ in a calcium-independent manner. Interacts with CALN1/CABP8 and CALN2/CABP7; in a calcium-dependent manner; this interaction competes with NCS1/FREQ binding. Interacts with ACBD3. Interacts with ARMH3, YWHAB, YWHAE, YWHAG, YWHAH, YWHAQ, YWHAZ and SFN. Interacts with GGA2 (via VHS domain); the interaction is important for PI4KB location at the Golgi apparatus membrane. Interacts with ATG9A. Mg(2+) serves as cofactor. Requires Mn(2+) as cofactor.

The protein localises to the endomembrane system. It is found in the mitochondrion outer membrane. It localises to the rough endoplasmic reticulum membrane. The protein resides in the golgi apparatus. Its subcellular location is the golgi apparatus membrane. The catalysed reaction is a 1,2-diacyl-sn-glycero-3-phospho-(1D-myo-inositol) + ATP = a 1,2-diacyl-sn-glycero-3-phospho-(1D-myo-inositol 4-phosphate) + ADP + H(+). Its activity is regulated as follows. Inhibited by wortmannin. Increased kinase activity upon interaction with NCS1/FREQ. Functionally, phosphorylates phosphatidylinositol (PI) in the first committed step in the production of the second messenger inositol-1,4,5,-trisphosphate (PIP). May regulate Golgi disintegration/reorganization during mitosis, possibly via its phosphorylation. Involved in Golgi-to-plasma membrane trafficking. May play an important role in the inner ear development. This chain is Phosphatidylinositol 4-kinase beta (PI4KB), found in Sorex araneus (Eurasian common shrew).